Here is a 57-residue protein sequence, read N- to C-terminus: MLGWVVTFLVIALIAGILGFGGIAGASIEIAKIIFFIAVVLFLVSAVVGLARGRTRI.

2 helical membrane-spanning segments follow: residues 4 to 24 (WVVT…GGIA) and 30 to 50 (IAKI…VVGL).

The protein belongs to the UPF0391 family.

It is found in the cell membrane. The protein is UPF0391 membrane protein bsl6560 of Bradyrhizobium diazoefficiens (strain JCM 10833 / BCRC 13528 / IAM 13628 / NBRC 14792 / USDA 110).